We begin with the raw amino-acid sequence, 1819 residues long: MRPTTPSTTESPDNFSNMKLLYFSNEFPHDDLAGLSRQLTLLSKQKQFPHLARFLDHATEAVRDEVRQLPWSLRNTIPSFDSVFNFIEHASLRKGELGASIDGVLLVVVQLGTLIKYYEENPKKYDLNTGNAALSGLGLGLLSTAAVSLSSSVSDLAVAGVEVVRLAFRLGVVVGSVSSNLESRDPTSPPVSWAAVVPDVTVDEARDELDAFYAREKMPSTSKIFISAWSHNSVTISGPPSRLKHLFRTSEFFRGQKIINLPVYGGLCHAAHLYNQEHVREVVSETDSLKELSSRASPKLTTFATSTGKRFEAETARELFEQIVAEIMTKEIRWGTVVDSVLAQAHTTSCSDIQVLVFRKSLPVYDLLTAFSSKQPGLEVSTLELIPTIPASLDNGTPVSGGSSKSSIAIVGMSCRMPGGATDTESFWNLLEKGMDVHRTIPADRFDIDTHHDPKGKAMNSSHTAYGCFIDEPGLFDAPFFNMSPREAQQTDPMQRLALVTAYEALERAGYVANRTPATSLERIGTFYGQASDDYREVNTAQEISTYFIPGGCRAFGPGRINYFFKFAGPSFSIDTACSSSLATIQTACTSLWNKDTDMAVAGGMNVLTNSDAFAGLSHGHFLTKTPNACKTWDSEADGYCRADGIGSIVMKRLEDAIADNDNIIGVIRGAATNHSAEAVSITHPHAGAQSFLSSKVLSAAGIDPFDVSYVEMHGTGTQAGDKEEMKSVTDVFAPAGPKRRSMRQPLHVGAVKANVGHGEAVAGVTALIKVLLMFQKSMIPPHVGIKNSLNPALPSDLAERNVRIPYTRQAWPREKDRKRIAAVNNFSAAGGNTMIAIEEPPLPRNIAPEDEDPRTTHAVTVSAKSKVSLEGNLKRLIAFLENNPDVRMSDLAYTTAARKYHHNHRIAVAAADVPQLKKKLSAQLNSIDSVKSISNLQPLIAFAFTGQGASYKSMDLQLFHHEPTFRSQILHLNSLALAQGFPSFLPAVDGSFPKDHAHSAVVTQMALVAIEISLAAYWASLGVVPNVVVGHSLGEYAALYVAGVLSASDAIYLVGQRARLLEERVQAGSHKMMAVRASLADIQKIAAGMPYEVACINGPRDTVLSGLSKDLDTLIEPLQKAGFKCYSLDVAYAFHSSQTDPILEEFGELAETGAIFHAPKLPVLSPLLGKVIFDEKTLNATYMKRATRECVNYLAAVETGAKLSLVDDNTLWVEIGPHPVCINMSKSSLRSVGAAVPSMRRDESNWATMAQSLSTLHCAGATIRWNEFHKPFEKGLRLLDLPTYAWNNKNYWIQYNGDWALTKGNTYYDAQKKALETAKALPAPRLSDLKTSSVQRIIEESFDGSAGTVVMQSDLMEADFLAAAHGHKMNGCGVVTSSIHADISYTLGSYLLKKMSPSSGDIAMNVADLEVVKGLVAQKNTKVPQMIQVSISTENINTGTAQLRWQNVNAQGIPDEPFATATLEYGDRSAWLSSWVPQTHLIQGRIEALETLAAQGIANRLSHNMAYLLFANNLVDYATKYRGMQSVVINGLEAFADVTLTTEKGGVWTVPPYFIDSVAHLAGFVMNVSDAIDTKANYCVTPGWSSMRFAKPLVAGAKYRSYVKMIPTVEDRSVYLGDVYVLQDNEIIGIVGGIKFRQYPRILLNRFFSAPDEASPSPNPTHGATAKAQAQPKTIAASHGDEKHFATSVQISTPSKIGHQLIVKPVAIQAPPPAGPVVVALKDPEVQGSPVVVASAAAAVDTNSVASKAISMIANEAALEQADLQDEASFAELGIDSLMSLVISEKLREELGVVVSGSLFLEYPTIGDLRSWLMEYYG.

The Starter acyltransferase (SAT) domain occupies 38–265; sequence QLTLLSKQKQ…QKIINLPVYG (228 aa). Residues 405 to 840 form the Ketosynthase family 3 (KS3) domain; the sequence is KSSIAIVGMS…GGNTMIAIEE (436 aa). Residues Cys-578, His-714, and His-758 each act as for beta-ketoacyl synthase activity in the active site. One can recognise a Malonyl-CoA:ACP transacylase (MAT) domain in the interval 943-1262; the sequence is FAFTGQGASY…SLSTLHCAGA (320 aa). Residues 1336-1476 form an N-terminal hotdog fold region; it reads QRIIEESFDG…GDRSAWLSSW (141 aa). The PKS/mFAS DH domain maps to 1336–1646; the sequence is QRIIEESFDG…FRQYPRILLN (311 aa). His-1368 serves as the catalytic Proton acceptor; for dehydratase activity. The tract at residues 1404-1642 is dehydratase (DH) domain; that stretch reads AMNVADLEVV…GGIKFRQYPR (239 aa). Residues 1498–1646 form a C-terminal hotdog fold region; that stretch reads IANRLSHNMA…FRQYPRILLN (149 aa). Asp-1557 (proton donor; for dehydratase activity) is an active-site residue. The Carrier domain maps to 1741–1818; the sequence is VDTNSVASKA…DLRSWLMEYY (78 aa). O-(pantetheine 4'-phosphoryl)serine is present on Ser-1778.

It depends on pantetheine 4'-phosphate as a cofactor.

It functions in the pathway secondary metabolite biosynthesis. Functionally, non-reducing polyketide synthase; part of the gene cluster that mediates the biosynthesis of dibenzodioxocinones such as pestalotiollide B, a novel class of inhibitors against cholesterol ester transfer protein (CEPT). The biosynthesis initiates from condensation of acetate and malonate units catalyzed by the non-reducing PKS pks8/GME11356. Pks8/GME11356 lacks a thioesterase (TE) domain, which is important to the cyclizing of the third ring of atrochrysone carboxylic acid, and the esterase GME11355 might play the role of TE and catalyzes the cyclization reaction of the C ring. The lactamase-like protein GME11357 (or other beta-lactamases in Pestalotiopsis microspora) probably hydrolyzes the thioester bond between the ACP of pks8/GME11356 and the intermediate to release atrochrysone carboxylic acid, which is spontaneously dehydrates to form endocrocin anthrone. Endocrocin anthrone is further converted to emodin via the endocrocin intermediate. Emodin is then oxidized by several enzymes such as the Baeyer-Villiger oxidase GME11358, the oxidoreductase GME11367, the short chain dehydrogenase/reductase GME11373, as well as by other oxidoreductases from the cluster, to modify the A and C rings and open the B ring, and finally yield monodictyphenone. The prenyltransferase GME11375 may catalyze the addition reaction between the C5 side chains and the carbon bone of dibenzodioxocinones. The remaining biochemical reactions to the final product dibenzodioxocinones should be methylation catalyzed by methyltransferase GME11366 and reduction and lactonization reaction catalyzed by a series of oxidordeuctases. This chain is Non-reducing polyketide synthase 8, found in Pestalotiopsis microspora.